The chain runs to 458 residues: Probable M18 family aminopeptidase 1 (458 aa).

Zn(2+) is bound by residues histidine 95, histidine 170, and histidine 434.

It belongs to the peptidase M18 family. The cofactor is Zn(2+).

The chain is Probable M18 family aminopeptidase 1 from Borrelia garinii subsp. bavariensis (strain ATCC BAA-2496 / DSM 23469 / PBi) (Borreliella bavariensis).